The sequence spans 1370 residues: DNA-directed RNA polymerase subunit beta (1370 aa).

Belongs to the RNA polymerase beta chain family. As to quaternary structure, the RNAP catalytic core consists of 2 alpha, 1 beta, 1 beta' and 1 omega subunit. When a sigma factor is associated with the core the holoenzyme is formed, which can initiate transcription.

It catalyses the reaction RNA(n) + a ribonucleoside 5'-triphosphate = RNA(n+1) + diphosphate. Functionally, DNA-dependent RNA polymerase catalyzes the transcription of DNA into RNA using the four ribonucleoside triphosphates as substrates. The polypeptide is DNA-directed RNA polymerase subunit beta (Geobacter sulfurreducens (strain ATCC 51573 / DSM 12127 / PCA)).